The chain runs to 470 residues: Siroheme synthase (470 aa).

The tract at residues Met-1–Val-201 is precorrin-2 dehydrogenase /sirohydrochlorin ferrochelatase. NAD(+) is bound by residues Glu-22–Ile-23 and Cys-43–Glu-44. A Phosphoserine modification is found at Ser-128. The segment at Gly-213–Gly-470 is uroporphyrinogen-III C-methyltransferase. Pro-222 is a binding site for S-adenosyl-L-methionine. The active-site Proton acceptor is the Asp-245. Lys-267 (proton donor) is an active-site residue. S-adenosyl-L-methionine is bound by residues Gly-298–Asp-300, Ile-303, Thr-328–Ala-329, Met-379, and Gly-408.

This sequence in the N-terminal section; belongs to the precorrin-2 dehydrogenase / sirohydrochlorin ferrochelatase family. It in the C-terminal section; belongs to the precorrin methyltransferase family.

It carries out the reaction uroporphyrinogen III + 2 S-adenosyl-L-methionine = precorrin-2 + 2 S-adenosyl-L-homocysteine + H(+). It catalyses the reaction precorrin-2 + NAD(+) = sirohydrochlorin + NADH + 2 H(+). The catalysed reaction is siroheme + 2 H(+) = sirohydrochlorin + Fe(2+). It participates in cofactor biosynthesis; adenosylcobalamin biosynthesis; precorrin-2 from uroporphyrinogen III: step 1/1. It functions in the pathway cofactor biosynthesis; adenosylcobalamin biosynthesis; sirohydrochlorin from precorrin-2: step 1/1. Its pathway is porphyrin-containing compound metabolism; siroheme biosynthesis; precorrin-2 from uroporphyrinogen III: step 1/1. The protein operates within porphyrin-containing compound metabolism; siroheme biosynthesis; siroheme from sirohydrochlorin: step 1/1. It participates in porphyrin-containing compound metabolism; siroheme biosynthesis; sirohydrochlorin from precorrin-2: step 1/1. In terms of biological role, multifunctional enzyme that catalyzes the SAM-dependent methylations of uroporphyrinogen III at position C-2 and C-7 to form precorrin-2 via precorrin-1. Then it catalyzes the NAD-dependent ring dehydrogenation of precorrin-2 to yield sirohydrochlorin. Finally, it catalyzes the ferrochelation of sirohydrochlorin to yield siroheme. The chain is Siroheme synthase from Yersinia pestis.